Reading from the N-terminus, the 380-residue chain is Chaperone protein DnaJ (380 aa).

The J domain maps to Asp5–Gly70. The segment at Gly137 to His215 adopts a CR-type zinc-finger fold. Cys150, Cys153, Cys167, Cys170, Cys189, Cys192, Cys203, and Cys206 together coordinate Zn(2+). CXXCXGXG motif repeat units follow at residues Cys150–Gly157, Cys167–Gly174, Cys189–Gly196, and Cys203–Gly210. Residues Ile222–Pro247 are disordered.

This sequence belongs to the DnaJ family. In terms of assembly, homodimer. It depends on Zn(2+) as a cofactor.

The protein localises to the cytoplasm. Functionally, participates actively in the response to hyperosmotic and heat shock by preventing the aggregation of stress-denatured proteins and by disaggregating proteins, also in an autonomous, DnaK-independent fashion. Unfolded proteins bind initially to DnaJ; upon interaction with the DnaJ-bound protein, DnaK hydrolyzes its bound ATP, resulting in the formation of a stable complex. GrpE releases ADP from DnaK; ATP binding to DnaK triggers the release of the substrate protein, thus completing the reaction cycle. Several rounds of ATP-dependent interactions between DnaJ, DnaK and GrpE are required for fully efficient folding. Also involved, together with DnaK and GrpE, in the DNA replication of plasmids through activation of initiation proteins. The polypeptide is Chaperone protein DnaJ (Nitrosococcus oceani (strain ATCC 19707 / BCRC 17464 / JCM 30415 / NCIMB 11848 / C-107)).